The chain runs to 152 residues: Cytochrome c-type biogenesis protein CcmE (152 aa).

Residues 1 to 9 (MRGLKKQRR) lie on the Cytoplasmic side of the membrane. The chain crosses the membrane as a helical; Signal-anchor for type II membrane protein span at residues 10-30 (IQILIVAAVALTLSSVLIGYA). At 31–152 (LRDGINFFRP…PDGYARDGDS (122 aa)) the chain is on the periplasmic side. Positions 123 and 127 each coordinate heme.

Belongs to the CcmE/CycJ family.

Its subcellular location is the cell inner membrane. Heme chaperone required for the biogenesis of c-type cytochromes. Transiently binds heme delivered by CcmC and transfers the heme to apo-cytochromes in a process facilitated by CcmF and CcmH. The sequence is that of Cytochrome c-type biogenesis protein CcmE from Jannaschia sp. (strain CCS1).